Here is a 250-residue protein sequence, read N- to C-terminus: NAD(P)H-hydrate epimerase (250 aa).

The region spanning 14-238 (AAALDVELMS…SIAEKYGIQK (225 aa)) is the YjeF N-terminal domain. 74-78 (NNGGD) contributes to the (6S)-NADPHX binding site. Positions 75 and 143 each coordinate K(+). (6S)-NADPHX contacts are provided by residues 147–154 (GFSFHGTA), Tyr159, and Asp180. Ser183 is a binding site for K(+).

This sequence belongs to the NnrE/AIBP family. K(+) is required as a cofactor.

The catalysed reaction is (6R)-NADHX = (6S)-NADHX. It carries out the reaction (6R)-NADPHX = (6S)-NADPHX. In terms of biological role, catalyzes the epimerization of the S- and R-forms of NAD(P)HX, a damaged form of NAD(P)H that is a result of enzymatic or heat-dependent hydration. This is a prerequisite for the S-specific NAD(P)H-hydrate dehydratase to allow the repair of both epimers of NAD(P)HX. The chain is NAD(P)H-hydrate epimerase from Thalassiosira pseudonana (Marine diatom).